We begin with the raw amino-acid sequence, 231 residues long: Ribonuclease HI (231 aa).

The region spanning 1–146 (MRERAVAACD…ADRAASQAAV (146 aa)) is the RNase H type-1 domain. Mg(2+) contacts are provided by Asp10, Glu50, Asp72, and Asp138. Low complexity-rich tracts occupy residues 148–157 (QEAAGSALGS) and 166–181 (VPAA…SGAA). 2 disordered regions span residues 148–192 (QEAA…SART) and 212–231 (PIAK…VAAG).

Belongs to the RNase H family. Monomer. Mg(2+) is required as a cofactor.

It is found in the cytoplasm. It carries out the reaction Endonucleolytic cleavage to 5'-phosphomonoester.. Endonuclease that specifically degrades the RNA of RNA-DNA hybrids. This Streptomyces coelicolor (strain ATCC BAA-471 / A3(2) / M145) protein is Ribonuclease HI (rnhA).